We begin with the raw amino-acid sequence, 520 residues long: MDSDEEFIDNSLAVGDIVYDEAQIAQQQQEYAAQLKLASTAIPTVVKDFIQYFHRCLSDNSVYELHGCYENSFGKLTDKFYKNSHWPHPVAQVAPLVKNDPVFLYFYSELYYRHLYAKLTPTPLERFESYSNYCNLFNYILNSDGPVDLELPTSWAWGIVDEFIYQYNSYWMTKEAHNSDGVAPDTWGTYSVLNVLYSLSEKTKIREQLRAIKAGLDPMDVAGPYGSRPLYKMLGYFCVIGLLRVHTLLGDFTLALKTMESIELTKKALFARVAPAHFATYYYVGICYVMTRRYADAIRCFSHVLTYMARTKNVQGPRYDAKRSEQMYALLAICVVLSPARLDDSIHVALRDRYGDQMAAMQRGDLKLFEELFTFAAPKFIQPGDVHGGDPLKHHLKIFMVDVTNTLSTANLKSYLNLYATMDLGKLASFLDTDAEDLRSQLVTLKMKNRQLRWTEGELADGTYQHCSELDIALENDLIHVAEAKGGRKFADWFIRNTVKNYSVQDYIVNGDKKDKEKKN.

Positions 278–478 constitute a PCI domain; it reads FATYYYVGIC…ELDIALENDL (201 aa).

This sequence belongs to the eIF-3 subunit L family. In terms of assembly, component of the eukaryotic translation initiation factor 3 (eIF-3) complex.

It is found in the cytoplasm. Component of the eukaryotic translation initiation factor 3 (eIF-3) complex, which is involved in protein synthesis of a specialized repertoire of mRNAs and, together with other initiation factors, stimulates binding of mRNA and methionyl-tRNAi to the 40S ribosome. The eIF-3 complex specifically targets and initiates translation of a subset of mRNAs involved in cell proliferation. This chain is Eukaryotic translation initiation factor 3 subunit L, found in Yarrowia lipolytica (strain CLIB 122 / E 150) (Yeast).